The chain runs to 193 residues: MLDDEVVWPEDAIEVGRIVDAWGIKGGIKVLPFSSDPQALFSSRRWFLRPPEKPMGPKAAKPLPTLLRITNAREQGDVIVATAQDVADRNAAEALRGCSVFVSRASFPTADVDEYYWIDLIGLAVVNREGQALGNVADLLDTGAHSVLRVTQVETDDQGRSLERERLIPFVAAYIDAVSLEQRCITVDWGLDF.

Positions 112 to 193 constitute a PRC barrel domain; it reads VDEYYWIDLI…CITVDWGLDF (82 aa).

This sequence belongs to the RimM family. In terms of assembly, binds ribosomal protein uS19.

The protein resides in the cytoplasm. In terms of biological role, an accessory protein needed during the final step in the assembly of 30S ribosomal subunit, possibly for assembly of the head region. Essential for efficient processing of 16S rRNA. May be needed both before and after RbfA during the maturation of 16S rRNA. It has affinity for free ribosomal 30S subunits but not for 70S ribosomes. In Methylibium petroleiphilum (strain ATCC BAA-1232 / LMG 22953 / PM1), this protein is Ribosome maturation factor RimM.